The primary structure comprises 495 residues: Pre-glycoprotein polyprotein GP complex (495 aa).

Residue glycine 2 is the site of N-myristoyl glycine; by host attachment. Residues 2–17 (GQIITFFQEVPHIIEE) lie on the Extracellular side of the membrane. Residues 18-33 (VMNIVLITLSLLAILK) traverse the membrane as a helical segment. Residues 34–58 (GVYNVMTCGLIGLISFLLLCGKSCS) lie on the Cytoplasmic side of the membrane. Zn(2+) is bound at residue cysteine 57. Topologically, residues 59–436 (LIYKDTYNFS…QGKTPLGLVD (378 aa)) are extracellular. Residues asparagine 78, asparagine 88, asparagine 107, asparagine 117, and asparagine 165 are each glycosylated (N-linked (GlcNAc...) asparagine; by host). Disulfide bonds link cysteine 85-cysteine 235, cysteine 116-cysteine 153, cysteine 178-cysteine 216, cysteine 283-cysteine 296, cysteine 305-cysteine 314, and cysteine 368-cysteine 389. Asparagine 228 carries an N-linked (GlcNAc...) asparagine; by host glycan. Asparagine 369, asparagine 377, asparagine 394, and asparagine 399 each carry an N-linked (GlcNAc...) asparagine; by host glycan. The helical transmembrane segment at 437–457 (LFIFSTSFYSITVFLHLIKIP) threads the bilayer. The Cytoplasmic segment spans residues 458–495 (THRHIVGQGCPKPHRLNSRAICSCGAYKQPGLPTKWKR). Histidine 459, histidine 461, cysteine 467, histidine 471, cysteine 479, and cysteine 481 together coordinate Zn(2+).

It belongs to the arenaviridae GPC protein family. In terms of assembly, interacts with glycoprotein G2. Part of the GP complex (GP-C) together with glycoprotein G1 and glycoprotein G2. The GP-complex interacts with protein Z, which interacts with ribonucleocapsid; these interactions may induce virion budding. Homotrimer; disulfide-linked. In pre-fusion state, G1 homotrimers bind G2 homotrimers via ionic interactions. Part of the GP complex (GP-C) together with glycoprotein G2 and the stable signal peptide. The GP-complex interacts with protein Z, which interacts with ribonucleocapsid; these interactions may induce virion budding. As to quaternary structure, homotrimer. Interacts with the stable signal peptide. In pre-fusion state, G2 homotrimers bind G1 homotrimers via ionic interactions. Part of the GP complex (GP-C) together with glycoprotein G1 and the stable signal peptide. Acidification in the endosome triggers rearrangements, which ultimately leads to a 6 helix bundle formed by the two heptad repeat domains (HR1 and HR2) in post-fusion state. The GP-complex interacts with protein Z, which interacts with ribonucleocapsid; these interactions may induce virion budding. Post-translationally, specific enzymatic cleavages in vivo yield mature proteins. GP-C polyprotein is cleaved in the endoplasmic reticulum by the host protease MBTPS1. Only cleaved glycoprotein is incorporated into virions. The SSP remains stably associated with the GP complex following cleavage by signal peptidase and plays crucial roles in the trafficking of GP through the secretory pathway. In terms of processing, myristoylation is necessary for GP2-mediated fusion activity.

Its subcellular location is the virion membrane. It localises to the host endoplasmic reticulum membrane. The protein localises to the host Golgi apparatus membrane. It is found in the host cell membrane. In terms of biological role, functions as a cleaved signal peptide that is retained as the third component of the GP complex (GP-C). Helps to stabilize the spike complex in its native conformation. The SSP is required for efficient glycoprotein expression, post-translational maturation cleavage of G1 and G2, glycoprotein transport to the cell surface plasma membrane, formation of infectious virus particles, and acid pH-dependent glycoprotein-mediated cell fusion. Functionally, forms the virion spikes together with glycoprotein G2. The glycoprotein spike trimers are connected to the underlying matrix. Mediates virus attachment to host receptor alpha-dystroglycan DAG1. This interaction leads to virion entry into the host cell through the endosomal pathway. Its function is as follows. Forms the virion spikes together with glycoprotein G1. The glycoprotein spike trimers are connected to the underlying matrix. Class I viral fusion protein that directs fusion of viral and host endosomal membranes, leading to delivery of the nucleocapsid into the cytoplasm. Membrane fusion is mediated by irreversible conformational changes induced by acidification. This is Pre-glycoprotein polyprotein GP complex from Ippy mammarenavirus (isolate Rat/Central African Republic/Dak An B 188 d/1970) (IPPYV).